We begin with the raw amino-acid sequence, 164 residues long: ATP synthase subunit b (164 aa).

A helical transmembrane segment spans residues 12 to 32; the sequence is FILVTGSVIVLLLLIKAFAWG.

It belongs to the ATPase B chain family. As to quaternary structure, F-type ATPases have 2 components, F(1) - the catalytic core - and F(0) - the membrane proton channel. F(1) has five subunits: alpha(3), beta(3), gamma(1), delta(1), epsilon(1). F(0) has three main subunits: a(1), b(2) and c(10-14). The alpha and beta chains form an alternating ring which encloses part of the gamma chain. F(1) is attached to F(0) by a central stalk formed by the gamma and epsilon chains, while a peripheral stalk is formed by the delta and b chains.

It is found in the cell membrane. Its function is as follows. F(1)F(0) ATP synthase produces ATP from ADP in the presence of a proton or sodium gradient. F-type ATPases consist of two structural domains, F(1) containing the extramembraneous catalytic core and F(0) containing the membrane proton channel, linked together by a central stalk and a peripheral stalk. During catalysis, ATP synthesis in the catalytic domain of F(1) is coupled via a rotary mechanism of the central stalk subunits to proton translocation. Functionally, component of the F(0) channel, it forms part of the peripheral stalk, linking F(1) to F(0). The polypeptide is ATP synthase subunit b (Streptococcus equi subsp. zooepidemicus (strain MGCS10565)).